The primary structure comprises 187 residues: Structural protein ORF187 (187 aa).

A helical membrane pass occupies residues 65-85 (IYQPTAIAVSGVGGIIGALLA).

The protein localises to the host membrane. It localises to the virion. In Acidianus two-tailed virus (ATV), this protein is Structural protein ORF187.